A 122-amino-acid chain; its full sequence is Large ribosomal subunit protein uL14 (122 aa).

Belongs to the universal ribosomal protein uL14 family. As to quaternary structure, part of the 50S ribosomal subunit. Forms a cluster with proteins L3 and L19. In the 70S ribosome, L14 and L19 interact and together make contacts with the 16S rRNA in bridges B5 and B8.

In terms of biological role, binds to 23S rRNA. Forms part of two intersubunit bridges in the 70S ribosome. This chain is Large ribosomal subunit protein uL14, found in Thioalkalivibrio sulfidiphilus (strain HL-EbGR7).